The chain runs to 397 residues: Elongation factor Tu (397 aa).

One can recognise a tr-type G domain in the interval 10-207 (KPHVNVGTIG…TLDTYIPEPE (198 aa)). Residues 19-26 (GHVDHGKT) form a G1 region. 19-26 (GHVDHGKT) provides a ligand contact to GTP. Thr26 lines the Mg(2+) pocket. The interval 60–64 (GITIN) is G2. Residues 81-84 (DCPG) are G3. GTP contacts are provided by residues 81-85 (DCPGH) and 136-139 (NKAD). The interval 136 to 139 (NKAD) is G4. The interval 174–176 (SAL) is G5.

This sequence belongs to the TRAFAC class translation factor GTPase superfamily. Classic translation factor GTPase family. EF-Tu/EF-1A subfamily. As to quaternary structure, monomer.

It is found in the cytoplasm. The catalysed reaction is GTP + H2O = GDP + phosphate + H(+). GTP hydrolase that promotes the GTP-dependent binding of aminoacyl-tRNA to the A-site of ribosomes during protein biosynthesis. This chain is Elongation factor Tu, found in Pseudomonas fluorescens (strain ATCC BAA-477 / NRRL B-23932 / Pf-5).